A 199-amino-acid polypeptide reads, in one-letter code: Protein GrpE (199 aa).

A compositionally biased stretch (polar residues) spans 1–17 (MSDSDNNTKSQQNNPTQ). The segment at 1–36 (MSDSDNNTKSQQNNPTQTDEKSGEEIQSNQKPQRKF) is disordered.

This sequence belongs to the GrpE family. Homodimer.

It is found in the cytoplasm. Its function is as follows. Participates actively in the response to hyperosmotic and heat shock by preventing the aggregation of stress-denatured proteins, in association with DnaK and GrpE. It is the nucleotide exchange factor for DnaK and may function as a thermosensor. Unfolded proteins bind initially to DnaJ; upon interaction with the DnaJ-bound protein, DnaK hydrolyzes its bound ATP, resulting in the formation of a stable complex. GrpE releases ADP from DnaK; ATP binding to DnaK triggers the release of the substrate protein, thus completing the reaction cycle. Several rounds of ATP-dependent interactions between DnaJ, DnaK and GrpE are required for fully efficient folding. In Ehrlichia canis (strain Jake), this protein is Protein GrpE.